The sequence spans 506 residues: Plant intracellular Ras-group-related LRR protein 1 (506 aa).

Residues 24–48 (TAKSSSSSDVEPPPSKSDPSSSSNH) are disordered. Residues 143–193 (KSILKLNELHESYEKLLKEAEERLVRIYESAEKNAAAVAEEEAAEVEVNEE) adopt a coiled-coil conformation. LRR repeat units lie at residues 203–225 (ENPL…AFGK), 226–249 (IQGL…IAGL), 251–272 (NLLE…IGLL), 273–295 (SKLK…ICHC), 297–319 (SLVV…GFEL), 320–342 (VKLE…IGEM), 344–364 (SLRY…SFGL), 365–389 (LTNL…SFGD), 390–412 (LISL…AFGT), and 414–436 (VNLT…VVKQ). A GVYW motif is present at residues 437-449 (GVDAVKMYMGKRW).

It belongs to the SHOC2 family. Widely expressed.

Functionally, leucine-rich repeat protein that likely mediates protein interactions, possibly in the context of signal transduction. PIRL1 acts redundantly with PIRL9 in the differentiation of microspores into pollen. The polypeptide is Plant intracellular Ras-group-related LRR protein 1 (PIRL1) (Arabidopsis thaliana (Mouse-ear cress)).